We begin with the raw amino-acid sequence, 170 residues long: Ubiquinone/menaquinone biosynthesis C-methyltransferase UbiE (170 aa).

Residues 1–12 show a composition bias toward basic and acidic residues; that stretch reads MNDQRKGDHAEP. The tract at residues 1–22 is disordered; that stretch reads MNDQRKGDHAEPTTHFGYQDVP.

Belongs to the class I-like SAM-binding methyltransferase superfamily. MenG/UbiE family.

The catalysed reaction is a 2-demethylmenaquinol + S-adenosyl-L-methionine = a menaquinol + S-adenosyl-L-homocysteine + H(+). It carries out the reaction a 2-methoxy-6-(all-trans-polyprenyl)benzene-1,4-diol + S-adenosyl-L-methionine = a 5-methoxy-2-methyl-3-(all-trans-polyprenyl)benzene-1,4-diol + S-adenosyl-L-homocysteine + H(+). Its pathway is quinol/quinone metabolism; menaquinone biosynthesis; menaquinol from 1,4-dihydroxy-2-naphthoate: step 2/2. The protein operates within cofactor biosynthesis; ubiquinone biosynthesis. Functionally, methyltransferase required for the conversion of demethylmenaquinol (DMKH2) to menaquinol (MKH2) and the conversion of 2-polyprenyl-6-methoxy-1,4-benzoquinol (DDMQH2) to 2-polyprenyl-3-methyl-6-methoxy-1,4-benzoquinol (DMQH2). The polypeptide is Ubiquinone/menaquinone biosynthesis C-methyltransferase UbiE (ubiE) (Ectopseudomonas oleovorans (Pseudomonas oleovorans)).